An 80-amino-acid chain; its full sequence is uncharacterized protein (80 aa).

This is an uncharacterized protein from Vaccinia virus (strain Copenhagen) (VACV).